Here is a 296-residue protein sequence, read N- to C-terminus: Probable AP endonuclease (296 aa).

The cysteines at positions 16 and 20 are disulfide-linked. Zn(2+) contacts are provided by histidine 78, histidine 115, glutamate 142, histidine 182, histidine 218, aspartate 231, histidine 233, and glutamate 271.

This sequence belongs to the AP endonuclease 2 family. Zn(2+) serves as cofactor.

Its subcellular location is the host nucleus. The protein localises to the host cytoplasm. It is found in the virion. Endonuclease that plays a role in DNA repair. Cleaves phosphodiester bonds on the 5' side of apurinic or apyrimidinic sites (AP sites). In addition to endonuclease activity, the ASFV enzyme has a proofreading 3'-5' exonuclease activity that is considerably more efficient in the elimination of a mismatch than in that of a correctly paired base. Displays 3'-phosphatase and 3'-repair diesterase activities. The single nucleotide gaps generated by the AP endonuclease are filled by the viral AP endonuclease and DNA ligase. This Ornithodoros (relapsing fever ticks) protein is Probable AP endonuclease.